A 499-amino-acid chain; its full sequence is Glutamate--tRNA ligase (499 aa).

The short motif at Pro10–Met20 is the 'HIGH' region element. A 'KMSKS' region motif is present at residues Lys255–Arg259. Lys258 lines the ATP pocket.

Belongs to the class-I aminoacyl-tRNA synthetase family. Glutamate--tRNA ligase type 1 subfamily. In terms of assembly, monomer.

It localises to the cytoplasm. It carries out the reaction tRNA(Glu) + L-glutamate + ATP = L-glutamyl-tRNA(Glu) + AMP + diphosphate. In terms of biological role, catalyzes the attachment of glutamate to tRNA(Glu) in a two-step reaction: glutamate is first activated by ATP to form Glu-AMP and then transferred to the acceptor end of tRNA(Glu). This is Glutamate--tRNA ligase from Corynebacterium urealyticum (strain ATCC 43042 / DSM 7109).